Reading from the N-terminus, the 444-residue chain is Probable glycine dehydrogenase (decarboxylating) subunit 1 (444 aa).

The protein belongs to the GcvP family. N-terminal subunit subfamily. In terms of assembly, the glycine cleavage system is composed of four proteins: P, T, L and H. In this organism, the P 'protein' is a heterodimer of two subunits.

The catalysed reaction is N(6)-[(R)-lipoyl]-L-lysyl-[glycine-cleavage complex H protein] + glycine + H(+) = N(6)-[(R)-S(8)-aminomethyldihydrolipoyl]-L-lysyl-[glycine-cleavage complex H protein] + CO2. Functionally, the glycine cleavage system catalyzes the degradation of glycine. The P protein binds the alpha-amino group of glycine through its pyridoxal phosphate cofactor; CO(2) is released and the remaining methylamine moiety is then transferred to the lipoamide cofactor of the H protein. This Chlorobaculum parvum (strain DSM 263 / NCIMB 8327) (Chlorobium vibrioforme subsp. thiosulfatophilum) protein is Probable glycine dehydrogenase (decarboxylating) subunit 1.